The primary structure comprises 126 residues: Acidic phospholipase A2 S1E6-b (126 aa).

An N-terminal signal peptide occupies residues 1 to 3 (VEG). Disulfide bonds link C29/C119, C31/C47, C46/C98, C52/C126, C53/C91, C60/C84, and C78/C89. Ca(2+)-binding residues include Y30, G32, and G34. The active site involves H50. D51 is a Ca(2+) binding site. Residue D92 is part of the active site.

In terms of assembly, homodimer. The cofactor is Ca(2+). As to expression, expressed by the venom gland.

It is found in the secreted. The catalysed reaction is a 1,2-diacyl-sn-glycero-3-phosphocholine + H2O = a 1-acyl-sn-glycero-3-phosphocholine + a fatty acid + H(+). Snake venom phospholipase that inhibits ADP-induced platelet aggregation. PLA2 catalyzes the calcium-dependent hydrolysis of the 2-acyl groups in 3-sn-phosphoglycerides. This chain is Acidic phospholipase A2 S1E6-b, found in Calloselasma rhodostoma (Malayan pit viper).